Here is a 205-residue protein sequence, read N- to C-terminus: Ephrin-A1 (205 aa).

The N-terminal stretch at 1-18 (MEFFWASLLGLCCSLAAA) is a signal peptide. The 133-residue stretch at 19 to 151 (NRHTVFWNSS…RLKVMIAGKI (133 aa)) folds into the Ephrin RBD domain. N26 carries an N-linked (GlcNAc...) asparagine glycan. Cystine bridges form between C51–C92 and C80–C140. S182 is lipidated: GPI-anchor amidated serine. Residues 183 to 205 (AAPRLFPLAWAVLLLPFLLLQIP) constitute a propeptide, removed in mature form.

Belongs to the ephrin family. Monomer. Homodimer. Forms heterodimers with EPHA2. Binds to the receptor tyrosine kinases EPHA2, EPHA3, EPHA4, EPHA5, EPHA6 and EPHA7. Also binds with low affinity to EPHA1. Undergoes proteolysis by a metalloprotease to give rise to a soluble monomeric form. Post-translationally, N-Glycosylation is required for binding to EPHA2 receptor and inducing its internalization.

The protein localises to the cell membrane. It localises to the secreted. Its function is as follows. Cell surface GPI-bound ligand for Eph receptors, a family of receptor tyrosine kinases which are crucial for migration, repulsion and adhesion during neuronal, vascular and epithelial development. Binds promiscuously Eph receptors residing on adjacent cells, leading to contact-dependent bidirectional signaling into neighboring cells. Plays an important role in angiogenesis and tumor neovascularization. The recruitment of VAV2, VAV3 and PI3-kinase p85 subunit by phosphorylated EPHA2 is critical for EFNA1-induced RAC1 GTPase activation and vascular endothelial cell migration and assembly. Exerts anti-oncogenic effects in tumor cells through activation and down-regulation of EPHA2. Activates EPHA2 by inducing tyrosine phosphorylation which leads to its internalization and degradation. Acts as a negative regulator in the tumorigenesis of gliomas by down-regulating EPHA2 and FAK. Can evoke collapse of embryonic neuronal growth cone and regulates dendritic spine morphogenesis. This chain is Ephrin-A1 (EFNA1), found in Bos taurus (Bovine).